Consider the following 267-residue polypeptide: NADP-dependent mannitol dehydrogenase (267 aa).

2 residues coordinate NADP(+): N108 and K141. The active-site Proton donor is S160. Residues Y175, K179, I207, and T209 each contribute to the NADP(+) site. Y175 serves as the catalytic Proton acceptor. Catalysis depends on K179, which acts as the Lowers pKa of active site Tyr.

Belongs to the short-chain dehydrogenases/reductases (SDR) family. As to quaternary structure, exists as monomer, dimer and tetramer.

The catalysed reaction is D-mannitol + NADP(+) = D-fructose + NADPH + H(+). In terms of biological role, interconverts D-mannitol and D-fructose. Not active with fructose 6-phosphate or NADH. The protein is NADP-dependent mannitol dehydrogenase of Davidiella tassiana (Mycosphaerella tassiana).